Here is a 101-residue protein sequence, read N- to C-terminus: Small ribosomal subunit protein uS14 (101 aa).

A compositionally biased stretch (basic and acidic residues) spans 1-10 (MAKKSAIEKN). Positions 1–23 (MAKKSAIEKNNRRKKMTKNAAPK) are disordered. Residues 11–23 (NRRKKMTKNAAPK) are compositionally biased toward basic residues.

In terms of assembly, part of the 30S ribosomal subunit. Contacts proteins S3 and S10.

In terms of biological role, binds 16S rRNA, required for the assembly of 30S particles and may also be responsible for determining the conformation of the 16S rRNA at the A site. The protein is Small ribosomal subunit protein uS14 of Rhodopseudomonas palustris (strain ATCC BAA-98 / CGA009).